The sequence spans 515 residues: MDEFHRCGKEDSFWQQCFLYPLFFQEDLYAISHDHYLDVSSSSRPMEHLSSNDQLSFLTVKRLIGQIRQQNHSIVLFVNCDPNALADRKKSFYSESVLEALTLVLEVPFSIRSKYSVEGMNECKSFRSIHSIFPFLEDKFPHSNSILDARIPYSIHPEILVRTFRRWIRDAPSLHPLRSVLYDYRNSPENLQRSIIVVPRVNTRFFLFLLNYYVCECESILFSRLKRSSHSRSLSHGSFPQRTHFHRKIKHIIIFSRRNSLKSIWSLKDPKINYVRYGERPIIAIKGAHLLVKKCRYYLLIFRQFYFHLWSEPYRVCSHQLSKNCSSSPGYFLRVRMNPIFVRTKMLDELFIADLITNEMDPIVPIVPIIGLLAAEKFCDISGRPISKLSWTSLTDDDILDRFDQIWRNLFHYYSGSFDRDGLYRIKYILSLSCAKTLACKHKSTIRVVRKELGPELLKKSFSKEREFDSLPFSSKAAARSQRERIWHSDILQINPLANSWQKIQDLKIENLFDQ.

It belongs to the intron maturase 2 family. MatK subfamily.

The protein localises to the plastid. The protein resides in the chloroplast. Its function is as follows. Usually encoded in the trnK tRNA gene intron. Probably assists in splicing its own and other chloroplast group II introns. The polypeptide is Maturase K (Pinus halepensis (Aleppo pine)).